Here is a 244-residue protein sequence, read N- to C-terminus: Uridylate kinase (244 aa).

Position 11–14 (11–14 (KLSG)) interacts with ATP. The involved in allosteric activation by GTP stretch occupies residues 19-24 (GSLGYG). Residue glycine 53 participates in UMP binding. ATP contacts are provided by glycine 54 and arginine 58. UMP is bound by residues aspartate 73 and 134–141 (SGNPFFTT). ATP contacts are provided by threonine 161, tyrosine 167, and aspartate 170.

It belongs to the UMP kinase family. As to quaternary structure, homohexamer.

It is found in the cytoplasm. It carries out the reaction UMP + ATP = UDP + ADP. It participates in pyrimidine metabolism; CTP biosynthesis via de novo pathway; UDP from UMP (UMPK route): step 1/1. Its activity is regulated as follows. Allosterically activated by GTP. Inhibited by UTP. In terms of biological role, catalyzes the reversible phosphorylation of UMP to UDP. The protein is Uridylate kinase of Trichodesmium erythraeum (strain IMS101).